Consider the following 119-residue polypeptide: Ubiquinone biosynthesis accessory factor UbiK (119 aa).

Residues 79-99 (LLRTREKLALLEQRLSELEAR) adopt a coiled-coil conformation. Residues 96–106 (LEARDKPEEVK) show a composition bias toward basic and acidic residues. A disordered region spans residues 96–119 (LEARDKPEEVKPAPAIPPVDPQQE). Positions 109–119 (PAIPPVDPQQE) are enriched in pro residues.

It belongs to the UbiK family. As to quaternary structure, homotrimer.

The protein localises to the cytoplasm. It participates in cofactor biosynthesis; ubiquinone biosynthesis. Functionally, required for efficient ubiquinone (coenzyme Q) biosynthesis under aerobic conditions. UbiK is probably an accessory factor of Ubi enzymes and facilitates ubiquinone biosynthesis by acting as an assembly factor, a targeting factor, or both. Dispensable for ubiquinone biosynthesis under anaerobiosis. Required for proliferation in macrophages and virulence in mice. Significantly contributes to colonization and invasion as well as host inflammation and innate immunity after infection. In vitro, has membrane fusogenic activity at acidic pH. In Salmonella typhimurium (strain LT2 / SGSC1412 / ATCC 700720), this protein is Ubiquinone biosynthesis accessory factor UbiK.